The primary structure comprises 35 residues: Malate dehydrogenase, mitochondrial (35 aa).

N7 contributes to the NAD(+) binding site. Residue R23 participates in substrate binding.

Belongs to the LDH/MDH superfamily. MDH type 1 family. Homodimer.

The protein localises to the mitochondrion matrix. It catalyses the reaction (S)-malate + NAD(+) = oxaloacetate + NADH + H(+). The sequence is that of Malate dehydrogenase, mitochondrial from Capsicum annuum var. annuum (Red pepper).